The primary structure comprises 207 residues: NADH-quinone oxidoreductase subunit A (207 aa).

The next 3 helical transmembrane spans lie at 6–26 (LSAI…LVVP), 62–82 (LVAI…AYAV), and 87–107 (AGWL…IGLV).

This sequence belongs to the complex I subunit 3 family. NDH-1 is composed of 14 different subunits. Subunits NuoA, H, J, K, L, M, N constitute the membrane sector of the complex.

It is found in the cell inner membrane. It carries out the reaction a quinone + NADH + 5 H(+)(in) = a quinol + NAD(+) + 4 H(+)(out). In terms of biological role, NDH-1 shuttles electrons from NADH, via FMN and iron-sulfur (Fe-S) centers, to quinones in the respiratory chain. The immediate electron acceptor for the enzyme in this species is believed to be ubiquinone. Couples the redox reaction to proton translocation (for every two electrons transferred, four hydrogen ions are translocated across the cytoplasmic membrane), and thus conserves the redox energy in a proton gradient. This is NADH-quinone oxidoreductase subunit A from Psychrobacter cryohalolentis (strain ATCC BAA-1226 / DSM 17306 / VKM B-2378 / K5).